We begin with the raw amino-acid sequence, 175 residues long: Catabolic 3-dehydroquinase (175 aa).

Y23 serves as the catalytic Proton acceptor. Substrate contacts are provided by N74, H80, and D87. The Proton donor role is filled by H100. Residues 101 to 102 and R111 contribute to the substrate site; that span reads IS.

It belongs to the type-II 3-dehydroquinase family. Homododecamer. Adopts a ring-like structure, composed of an arrangement of two hexameric rings stacked on top of one another.

It carries out the reaction 3-dehydroquinate = 3-dehydroshikimate + H2O. Its pathway is aromatic compound metabolism; 3,4-dihydroxybenzoate biosynthesis; 3,4-dihydroxybenzoate from 3-dehydroquinate: step 1/2. Is involved in the catabolism of quinate. Allows the utilization of quinate as carbon source via the beta-ketoadipate pathway. The protein is Catabolic 3-dehydroquinase of Talaromyces marneffei (strain ATCC 18224 / CBS 334.59 / QM 7333) (Penicillium marneffei).